Consider the following 227-residue polypeptide: Ornithine decarboxylase antizyme 1 (227 aa).

This sequence belongs to the ODC antizyme family. In terms of assembly, interacts with ODC1 and thereby sterically blocks ODC homodimerization. Forms a ternary complex with PSMB4 and OAZ1 before PSMB4 is incorporated into the 20S proteasome. Interacts with AZIN2; this interaction disrupts the interaction between the antizyme and ODC1. Interacts with FAM171A1.

Ornithine decarboxylase (ODC) antizyme protein that negatively regulates ODC activity and intracellular polyamine biosynthesis and uptake in response to increased intracellular polyamine levels. Binds to ODC monomers, inhibiting the assembly of the functional ODC homodimer, and targets the monomers for ubiquitin-independent proteolytic destruction by the 26S proteasome. Triggers ODC degradation by inducing the exposure of a cryptic proteasome-interacting surface of ODC. Stabilizes AZIN2 by interfering with its ubiquitination. Also inhibits cellular uptake of polyamines by inactivating the polyamine uptake transporter. SMAD1/OAZ1/PSMB4 complex mediates the degradation of the CREBBP/EP300 repressor SNIP1. Involved in the translocation of AZIN2 from ER-Golgi intermediate compartment (ERGIC) to the cytosol. In Rattus norvegicus (Rat), this protein is Ornithine decarboxylase antizyme 1 (Oaz1).